Consider the following 211-residue polypeptide: ATP-dependent Clp protease proteolytic subunit (211 aa).

Catalysis depends on serine 106, which acts as the Nucleophile. The active site involves histidine 131.

The protein belongs to the peptidase S14 family. As to quaternary structure, fourteen ClpP subunits assemble into 2 heptameric rings which stack back to back to give a disk-like structure with a central cavity, resembling the structure of eukaryotic proteasomes.

It localises to the cytoplasm. The enzyme catalyses Hydrolysis of proteins to small peptides in the presence of ATP and magnesium. alpha-casein is the usual test substrate. In the absence of ATP, only oligopeptides shorter than five residues are hydrolyzed (such as succinyl-Leu-Tyr-|-NHMec, and Leu-Tyr-Leu-|-Tyr-Trp, in which cleavage of the -Tyr-|-Leu- and -Tyr-|-Trp bonds also occurs).. In terms of biological role, cleaves peptides in various proteins in a process that requires ATP hydrolysis. Has a chymotrypsin-like activity. Plays a major role in the degradation of misfolded proteins. The chain is ATP-dependent Clp protease proteolytic subunit from Nitrobacter hamburgensis (strain DSM 10229 / NCIMB 13809 / X14).